Consider the following 303-residue polypeptide: Movement protein (303 aa).

The protein belongs to the tobamovirus movement protein family.

It localises to the host cytoplasm. Its subcellular location is the host cytoskeleton. The protein resides in the host cell junction. The protein localises to the host plasmodesma. In terms of biological role, transports viral genome to neighboring plant cells directly through plasmosdesmata, without any budding. The movement protein allows efficient cell to cell propagation, by bypassing the host cell wall barrier. Forms a ribonucleoprotein complex with viral RNA. Binds microtubules and modulates microtubule stability. Can bind double-stranded DNA. This is Movement protein (MP) from Cymbidium (ORSV).